Reading from the N-terminus, the 154-residue chain is Protein X (154 aa).

Residues 68 to 117 (PCALRFTSARRMETTVNAHQFLPKVLYKRTLGLSVMSTTDLEAYFKDCLF) are mitochondrial targeting sequence.

The protein belongs to the orthohepadnavirus protein X family. As to quaternary structure, may form homodimer. May interact with host CEBPA, CFLAR, CREB1, DDB1, E4F1, HBXIP, HSPD1/HSP60, NFKBIA, POLR2E and SMAD4. Interacts with host SMC5-SMC6 complex and induces its degradation. Interacts with host TRPC4AP; leading to prevent ubiquitination of TRPC4AP. Interacts with host PLSCR1; this interaction promotes ubiquitination and degradation of HBx and impairs HBx-mediated cell proliferation. A fraction may be phosphorylated in insect cells and HepG2 cells, a human hepatoblastoma cell line. Phosphorylated in vitro by host protein kinase C or mitogen-activated protein kinase. N-acetylated in insect cells.

The protein resides in the host cytoplasm. The protein localises to the host nucleus. It localises to the host mitochondrion. Multifunctional protein that plays a role in silencing host antiviral defenses and promoting viral transcription. Does not seem to be essential for HBV infection. May be directly involved in development of cirrhosis and liver cancer (hepatocellular carcinoma). Most of cytosolic activities involve modulation of cytosolic calcium. The effect on apoptosis is controversial depending on the cell types in which the studies have been conducted. May induce apoptosis by localizing in mitochondria and causing loss of mitochondrial membrane potential. May also modulate apoptosis by binding host CFLAR, a key regulator of the death-inducing signaling complex (DISC). Promotes viral transcription by using the host E3 ubiquitin ligase DDB1 to target the SMC5-SMC6 complex to proteasomal degradation. This host complex would otherwise bind to viral episomal DNA, and prevents its transcription. Moderately stimulates transcription of many different viral and cellular transcription elements. Promoters and enhancers stimulated by HBx contain DNA binding sites for NF-kappa-B, AP-1, AP-2, c-EBP, ATF/CREB, or the calcium-activated factor NF-AT. This Homo sapiens (Human) protein is Protein X.